Consider the following 100-residue polypeptide: Small ribosomal subunit protein uS14c (100 aa).

The protein belongs to the universal ribosomal protein uS14 family. As to quaternary structure, part of the 30S ribosomal subunit.

The protein localises to the plastid. It is found in the chloroplast. Binds 16S rRNA, required for the assembly of 30S particles. In Phaeodactylum tricornutum (strain CCAP 1055/1), this protein is Small ribosomal subunit protein uS14c.